The chain runs to 252 residues: NAC domain-containing protein 23 (252 aa).

One can recognise an NAC domain in the interval 12 to 177 (MPPGFRFQPT…EMVLCRISNK (166 aa)). A DNA-binding region spans residues 110–183 (TAVKRRFVFY…ISNKDLPKPP (74 aa)). A disordered region spans residues 225–252 (VDDAAAGTDDPGDLDEEIDDSMQRNHGG). Over residues 234–244 (DPGDLDEEIDD) the composition is skewed to acidic residues.

Forms heterodimers with NAC26. Expressed in stems and panicles. Expressed in developing endosperm.

The protein resides in the nucleus. It localises to the cytoplasm. In terms of biological role, transcription factor involved in the regulation of seed size. Binds to DNA-specific sequences of CLPD1 and OAT promoters in vitro. In Oryza sativa subsp. japonica (Rice), this protein is NAC domain-containing protein 23.